A 362-amino-acid polypeptide reads, in one-letter code: UDP-N-acetylglucosamine--N-acetylmuramyl-(pentapeptide) pyrophosphoryl-undecaprenol N-acetylglucosamine transferase (362 aa).

UDP-N-acetyl-alpha-D-glucosamine-binding positions include T14 to G16, R170, S199, and Q289.

It belongs to the glycosyltransferase 28 family. MurG subfamily.

It localises to the cell inner membrane. It carries out the reaction di-trans,octa-cis-undecaprenyl diphospho-N-acetyl-alpha-D-muramoyl-L-alanyl-D-glutamyl-meso-2,6-diaminopimeloyl-D-alanyl-D-alanine + UDP-N-acetyl-alpha-D-glucosamine = di-trans,octa-cis-undecaprenyl diphospho-[N-acetyl-alpha-D-glucosaminyl-(1-&gt;4)]-N-acetyl-alpha-D-muramoyl-L-alanyl-D-glutamyl-meso-2,6-diaminopimeloyl-D-alanyl-D-alanine + UDP + H(+). It functions in the pathway cell wall biogenesis; peptidoglycan biosynthesis. Functionally, cell wall formation. Catalyzes the transfer of a GlcNAc subunit on undecaprenyl-pyrophosphoryl-MurNAc-pentapeptide (lipid intermediate I) to form undecaprenyl-pyrophosphoryl-MurNAc-(pentapeptide)GlcNAc (lipid intermediate II). This is UDP-N-acetylglucosamine--N-acetylmuramyl-(pentapeptide) pyrophosphoryl-undecaprenol N-acetylglucosamine transferase from Borrelia turicatae (strain 91E135).